Consider the following 392-residue polypeptide: Autophagy-related protein 21 (392 aa).

2 WD repeats span residues 200-240 (VHQS…NDEP) and 250-289 (SRPSRISEMKFNHDNTLLACVGESDTIHIFALPVTTTEAD). The short motif at 246–250 (FRRGS) is the L/FRRG motif element.

This sequence belongs to the WD repeat PROPPIN family.

It localises to the cytoplasm. The protein localises to the membrane. Its subcellular location is the vacuole membrane. Required for cytoplasm to vacuole transport (Cvt) vesicles formation and mitophagy. Involved in binding of phosphatidylethanolamine to ATG8 and in recruitment of ATG8 and ATG5 to the pre-autophagosomal structure. Protects ATG8 from ARG4-mediated cleavage. The sequence is that of Autophagy-related protein 21 (ATG21) from Kluyveromyces lactis (strain ATCC 8585 / CBS 2359 / DSM 70799 / NBRC 1267 / NRRL Y-1140 / WM37) (Yeast).